A 440-amino-acid chain; its full sequence is GTPase Der (440 aa).

EngA-type G domains are found at residues 4–169 and 178–353; these read PVVA…PEED and IKVA…DQAA. GTP contacts are provided by residues 10–17, 57–61, 120–123, 184–191, 231–235, and 296–299; these read GRPNVGKS, DTGGI, NKVD, GKPNVGKS, DTAGI, and NKWD. Residues 354-438 form the KH-like domain; the sequence is MRISTGVLND…PIKFILREKE (85 aa).

Belongs to the TRAFAC class TrmE-Era-EngA-EngB-Septin-like GTPase superfamily. EngA (Der) GTPase family. As to quaternary structure, associates with the 50S ribosomal subunit.

Its function is as follows. GTPase that plays an essential role in the late steps of ribosome biogenesis. The chain is GTPase Der from Acetivibrio thermocellus (strain ATCC 27405 / DSM 1237 / JCM 9322 / NBRC 103400 / NCIMB 10682 / NRRL B-4536 / VPI 7372) (Clostridium thermocellum).